The chain runs to 322 residues: Putative HTH-type transcriptional regulatory protein rrnAC2519 (322 aa).

The 58-residue stretch at 132–189 (LADVREDRDWSLGRLAKELGVSRRTVSKYEDGMDASVEVAAELEDLFDAPLTSPVSVL) folds into the HTH cro/C1-type domain. Positions 143–162 (LGRLAKELGVSRRTVSKYED) form a DNA-binding region, H-T-H motif.

The sequence is that of Putative HTH-type transcriptional regulatory protein rrnAC2519 from Haloarcula marismortui (strain ATCC 43049 / DSM 3752 / JCM 8966 / VKM B-1809) (Halobacterium marismortui).